A 232-amino-acid chain; its full sequence is Large ribosomal subunit protein uL1 (232 aa).

Belongs to the universal ribosomal protein uL1 family. Part of the 50S ribosomal subunit.

Functionally, binds directly to 23S rRNA. The L1 stalk is quite mobile in the ribosome, and is involved in E site tRNA release. In terms of biological role, protein L1 is also a translational repressor protein, it controls the translation of the L11 operon by binding to its mRNA. The sequence is that of Large ribosomal subunit protein uL1 from Chlamydia pneumoniae (Chlamydophila pneumoniae).